A 312-amino-acid polypeptide reads, in one-letter code: Ribonuclease Z (312 aa).

Zn(2+) contacts are provided by H63, H65, D67, H68, H141, D212, and H270. Catalysis depends on D67, which acts as the Proton acceptor.

Belongs to the RNase Z family. Homodimer. Requires Zn(2+) as cofactor.

The catalysed reaction is Endonucleolytic cleavage of RNA, removing extra 3' nucleotides from tRNA precursor, generating 3' termini of tRNAs. A 3'-hydroxy group is left at the tRNA terminus and a 5'-phosphoryl group is left at the trailer molecule.. Functionally, zinc phosphodiesterase, which displays some tRNA 3'-processing endonuclease activity. Probably involved in tRNA maturation, by removing a 3'-trailer from precursor tRNA. This chain is Ribonuclease Z, found in Latilactobacillus sakei subsp. sakei (strain 23K) (Lactobacillus sakei subsp. sakei).